A 158-amino-acid chain; its full sequence is 6,7-dimethyl-8-ribityllumazine synthase (158 aa).

Residues Phe-24, 62–64 (CFE), and 86–88 (AVI) contribute to the 5-amino-6-(D-ribitylamino)uracil site. 91-92 (DT) contributes to the (2S)-2-hydroxy-3-oxobutyl phosphate binding site. The Proton donor role is filled by His-94. Phe-119 contacts 5-amino-6-(D-ribitylamino)uracil. A (2S)-2-hydroxy-3-oxobutyl phosphate-binding site is contributed by Arg-133.

The protein belongs to the DMRL synthase family.

The catalysed reaction is (2S)-2-hydroxy-3-oxobutyl phosphate + 5-amino-6-(D-ribitylamino)uracil = 6,7-dimethyl-8-(1-D-ribityl)lumazine + phosphate + 2 H2O + H(+). Its pathway is cofactor biosynthesis; riboflavin biosynthesis; riboflavin from 2-hydroxy-3-oxobutyl phosphate and 5-amino-6-(D-ribitylamino)uracil: step 1/2. Catalyzes the formation of 6,7-dimethyl-8-ribityllumazine by condensation of 5-amino-6-(D-ribitylamino)uracil with 3,4-dihydroxy-2-butanone 4-phosphate. This is the penultimate step in the biosynthesis of riboflavin. This Picosynechococcus sp. (strain ATCC 27264 / PCC 7002 / PR-6) (Agmenellum quadruplicatum) protein is 6,7-dimethyl-8-ribityllumazine synthase.